The sequence spans 312 residues: DNA-directed RNA polymerase subunit alpha (312 aa).

The tract at residues 1 to 225 (MIEFEKPNIT…VEHFKVFESA (225 aa)) is alpha N-terminal domain (alpha-NTD). Residues 243–312 (KEKKLEMTIE…DLGLSLRQED (70 aa)) are alpha C-terminal domain (alpha-CTD).

The protein belongs to the RNA polymerase alpha chain family. In terms of assembly, homodimer. The RNAP catalytic core consists of 2 alpha, 1 beta, 1 beta' and 1 omega subunit. When a sigma factor is associated with the core the holoenzyme is formed, which can initiate transcription.

It catalyses the reaction RNA(n) + a ribonucleoside 5'-triphosphate = RNA(n+1) + diphosphate. Its function is as follows. DNA-dependent RNA polymerase catalyzes the transcription of DNA into RNA using the four ribonucleoside triphosphates as substrates. This chain is DNA-directed RNA polymerase subunit alpha, found in Lactobacillus helveticus (strain DPC 4571).